The following is a 230-amino-acid chain: Cell division ATP-binding protein FtsE (230 aa).

An ABC transporter domain is found at 3 to 228 (ITLDHVTKQY…RDEQRGVYGM (226 aa)). ATP is bound at residue 37-44 (GPSGSGKS).

Belongs to the ABC transporter superfamily. As to quaternary structure, homodimer. Forms a membrane-associated complex with FtsX.

It localises to the cell membrane. Functionally, part of the ABC transporter FtsEX involved in cellular division. Has ATPase activity. This chain is Cell division ATP-binding protein FtsE, found in Mycobacterium tuberculosis (strain ATCC 25618 / H37Rv).